Here is a 590-residue protein sequence, read N- to C-terminus: Protein NRT1/ PTR FAMILY 6.3 (590 aa).

2 helical membrane passes run 46–66 (LTTL…MHLG) and 77–97 (FLGT…TFLG). Position 101 is a phosphothreonine; by CIPK23 (threonine 101). A run of 10 helical transmembrane segments spans residues 102 to 122 (IAIF…STII), 143 to 163 (GIQL…TGGV), 193 to 213 (FFFC…YVQD), 219 to 239 (WGYG…LAGT), 342 to 362 (MLPI…LTTL), 374 to 394 (IGSF…GLLL), 423 to 443 (IGLG…VELK), 460 to 480 (LGFY…ALIY), 501 to 521 (GLLL…VTIV), and 542 to 562 (YNFY…FLVF). Residues histidine 356 and threonine 360 each contribute to the substrate site.

The protein belongs to the major facilitator superfamily. Proton-dependent oligopeptide transporter (POT/PTR) (TC 2.A.17) family. Monomer and homodimer. The dimer has the 2 monomers in the same orientation. Interacts with CIPK23. Acts as a high-affinity nitrate transporter when phosphorylated and as a low-affinity transporter when dephosphorylated. Forms homodimer when unphosphorylated and monomer when phosphorylated. Low nitrogen concentration in the medium stimulates phosphorylation. Phosphorylation also regulates the nitrate signaling. Expressed in the stele in lateral root primordia before emergence and in the tip of primary and emerged lateral roots. Detected in emerging and immature leaves, guard cells, flower buds, style, stigma, anthers and pollen grains. Not detected in the shoot apical meristem.

It is found in the membrane. In terms of biological role, dual affinity nitrate transporter. Involved in proton-dependent nitrate uptake and in the regulation of the nitrate transporter NRT2.1. Also acts as a nitrate sensor that trigger a specific signaling pathway stimulating lateral root growth and seed germination. The uptake activity is not required for sensor function. Displays an auxin transport facilitation inhibited by high nitrate concentration. Required to prevent auxin accumulation in preemerged lateral root primordia and young lateral roots when external nitrate concentration is low or null. May be involved in the basipetal transport of auxin out of the lateral root tips. Acts as a bidirectional transporter involved in root-to-shoot nitrate translocation. Recognizes specifically nitrate and chlorate, but not nitrite, alanine, sulfate, phosphate or the di-peptide Ala-Ala. This is Protein NRT1/ PTR FAMILY 6.3 (NPF6.3) from Arabidopsis thaliana (Mouse-ear cress).